Consider the following 325-residue polypeptide: dITP/XTP pyrophosphatase (325 aa).

Positions 1 to 128 are unknown; it reads MKEKIYEYKD…KKVSELGDTI (128 aa). Residues 129 to 324 are NTP pyrophosphatase; that stretch reads LIATRNEGKT…MEVFPAWQNA (196 aa). 132 to 137 contacts substrate; sequence TRNEGK. The Mg(2+) site is built by Glu165 and Asp194. Asp194 (proton acceptor) is an active-site residue. Residues Ser195, 278–281, Lys301, and 306–307 contribute to the substrate site; these read FGYD and HR.

Belongs to the HAM1 NTPase family. As to quaternary structure, homodimer. Requires Mg(2+) as cofactor.

It catalyses the reaction XTP + H2O = XMP + diphosphate + H(+). It carries out the reaction dITP + H2O = dIMP + diphosphate + H(+). The enzyme catalyses ITP + H2O = IMP + diphosphate + H(+). In terms of biological role, pyrophosphatase that catalyzes the hydrolysis of nucleoside triphosphates to their monophosphate derivatives, with a high preference for the non-canonical purine nucleotides XTP (xanthosine triphosphate), dITP (deoxyinosine triphosphate) and ITP. Seems to function as a house-cleaning enzyme that removes non-canonical purine nucleotides from the nucleotide pool, thus preventing their incorporation into DNA/RNA and avoiding chromosomal lesions. This chain is dITP/XTP pyrophosphatase, found in Streptococcus mutans serotype c (strain ATCC 700610 / UA159).